A 586-amino-acid chain; its full sequence is Cryptochrome-1 (586 aa).

The Photolyase/cryptochrome alpha/beta domain maps to 3 to 132 (VNAVHWFRKG…EVIVRISHTL (130 aa)). Lys-11 is covalently cross-linked (Glycyl lysine isopeptide (Lys-Gly) (interchain with G-Cter in ubiquitin)). The LIR 1 signature appears at 50–54 (NRWRF). Ser-71 is modified (phosphoserine; by AMPK). The short motif at 82 to 87 (DVFPRL) is the LIR 2 element. Lys-107 is covalently cross-linked (Glycyl lysine isopeptide (Lys-Gly) (interchain with G-Cter in ubiquitin)). The LIR 3 signature appears at 151–156 (KRFQTL). Lys-159 participates in a covalent cross-link: Glycyl lysine isopeptide (Lys-Gly) (interchain with G-Cter in ubiquitin). Ser-247 is subject to Phosphoserine; by MAPK. An FAD-binding site is contributed by Ser-252. Short sequence motifs (LIR) lie at residues 255-260 (LRFGCL) and 271-276 (DLYKKV). At Ser-280 the chain carries Phosphoserine; by AMPK. The LIR 6 motif lies at 285 to 290 (SLYGQL). Position 289 (Gln-289) interacts with FAD. A Glycyl lysine isopeptide (Lys-Gly) (interchain with G-Cter in ubiquitin) cross-link involves residue Lys-329. Positions 335-339 (TGFPW) match the LIR 7 motif. His-355 is an FAD binding site. The segment at 371 to 470 (WISWEEGMKV…LIGINYPKPM (100 aa)) is required for inhibition of CLOCK-BMAL1-mediated transcription. The short motif at 379–384 (KVFEEL) is the LIR 8 element. 387 to 389 (DAD) contributes to the FAD binding site. Short sequence motifs (LIR) lie at residues 395 to 400 (GSWMWL), 411 to 416 (HCYCPV), and 430 to 435 (RRYLPV). The segment at 471-493 (VNHAEASRLNIERMKQIYQQLSR) is interaction with TIMELESS. Lys-485 is covalently cross-linked (Glycyl lysine isopeptide (Lys-Gly) (interchain with G-Cter in ubiquitin)). 2 consecutive short sequence motifs (LIR) follow at residues 486 to 491 (QIYQQL) and 492 to 497 (SRYRGL). The segment covering 545–559 (QQTHLLKQGRSSMGT) has biased composition (polar residues). Residues 545–586 (QQTHLLKQGRSSMGTGLSGGKRPSQEEDTQSIGPKVQRQSTN) form a disordered region. Lys-565 participates in a covalent cross-link: Glycyl lysine isopeptide (Lys-Gly) (interchain with G-Cter in ubiquitin). Residue Ser-568 is modified to Phosphoserine.

Belongs to the DNA photolyase class-1 family. In terms of assembly, component of the circadian core oscillator, which includes the CRY proteins, CLOCK or NPAS2, BMAL1 or BMAL2, CSNK1D and/or CSNK1E, TIMELESS, and the PER proteins. Interacts directly with TIMELESS. Interacts directly with PER1, PER2 and PER3; interaction with PER2 inhibits its ubiquitination and vice versa. Interacts with FBXL21. Interacts with FBXL3. Interacts with CLOCK-BMAL1 independently of PER2 and DNA. Interacts with HDAC1, HDAC2 and SIN3B. Interacts with nuclear receptors AR, NR1D1, NR3C1/GR, RORA and RORC; the interaction with at least NR3C1/GR is ligand dependent. Interacts with PRKDC. Interacts with the G protein subunit alpha GNAS; the interaction may block GPCR-mediated regulation of cAMP concentrations. Interacts with PRMT5. Interacts with EZH2. Interacts with MYBBP1A, DOCK7, HNRNPU, RPL7A, RPL8 and RPS3. Interacts with PPP5C (via TPR repeats). Interacts with MAP1LC3B. Interacts with CLOCK. Interacts with BMAL1. Interacts weakly with HDAC3; this interaction is enhanced in the presence of FBXL3. Interacts with TRIM28, KCTD5 and DDB1. Interacts with FOXO1. Interacts with DTL and DDB1-CUL4A complex. Interacts with HNF4A. Interacts with PSMD2 in a KDM8-dependent manner. Interacts with KDM8 in a FBXL3-dependent manner. Interacts with PPARG in a ligand-dependent manner. Interacts with PPARD (via domain NR LBD) and NR1I2 (via domain NR LBD) in a ligand-dependent manner. Interacts with PPARA, NR1I3 and VDR. FAD serves as cofactor. (6R)-5,10-methylene-5,6,7,8-tetrahydrofolate is required as a cofactor. In terms of processing, phosphorylation on Ser-247 by MAPK is important for the inhibition of CLOCK-BMAL1-mediated transcriptional activity. Phosphorylation by CSNK1E requires interaction with PER1 or PER2. Phosphorylation at Ser-71 and Ser-280 by AMPK decreases protein stability. Phosphorylation at Ser-568 exhibits a robust circadian rhythm with a peak at CT8, increases protein stability, prevents SCF(FBXL3)-mediated degradation and is antagonized by interaction with PRKDC. Ubiquitinated by the SCF(FBXL3) and SCF(FBXL21) complexes, regulating the balance between degradation and stabilization. The SCF(FBXL3) complex is mainly nuclear and mediates ubiquitination and subsequent degradation of CRY1. In contrast, cytoplasmic SCF(FBXL21) complex-mediated ubiquitination leads to stabilize CRY1 and counteract the activity of the SCF(FBXL3) complex. The SCF(FBXL3) and SCF(FBXL21) complexes probably mediate ubiquitination at different Lys residues. Ubiquitination at Lys-11 and Lys-107 are specifically ubiquitinated by the SCF(FBXL21) complex but not by the SCF(FBXL3) complex. Ubiquitination may be inhibited by PER2. Deubiquitinated by USP7. Post-translationally, undergoes autophagy-mediated degradation in the liver in a time-dependent manner. Autophagic degradation of CRY1 (an inhibitor of gluconeogenesis) occurs during periods of reduced feeding allowing induction of gluconeogenesis and maintenance of blood glucose levels.

It is found in the cytoplasm. The protein resides in the nucleus. Its function is as follows. Transcriptional repressor which forms a core component of the circadian clock. The circadian clock, an internal time-keeping system, regulates various physiological processes through the generation of approximately 24 hour circadian rhythms in gene expression, which are translated into rhythms in metabolism and behavior. It is derived from the Latin roots 'circa' (about) and 'diem' (day) and acts as an important regulator of a wide array of physiological functions including metabolism, sleep, body temperature, blood pressure, endocrine, immune, cardiovascular, and renal function. Consists of two major components: the central clock, residing in the suprachiasmatic nucleus (SCN) of the brain, and the peripheral clocks that are present in nearly every tissue and organ system. Both the central and peripheral clocks can be reset by environmental cues, also known as Zeitgebers (German for 'timegivers'). The predominant Zeitgeber for the central clock is light, which is sensed by retina and signals directly to the SCN. The central clock entrains the peripheral clocks through neuronal and hormonal signals, body temperature and feeding-related cues, aligning all clocks with the external light/dark cycle. Circadian rhythms allow an organism to achieve temporal homeostasis with its environment at the molecular level by regulating gene expression to create a peak of protein expression once every 24 hours to control when a particular physiological process is most active with respect to the solar day. Transcription and translation of core clock components (CLOCK, NPAS2, BMAL1, BMAL2, PER1, PER2, PER3, CRY1 and CRY2) plays a critical role in rhythm generation, whereas delays imposed by post-translational modifications (PTMs) are important for determining the period (tau) of the rhythms (tau refers to the period of a rhythm and is the length, in time, of one complete cycle). A diurnal rhythm is synchronized with the day/night cycle, while the ultradian and infradian rhythms have a period shorter and longer than 24 hours, respectively. Disruptions in the circadian rhythms contribute to the pathology of cardiovascular diseases, cancer, metabolic syndromes and aging. A transcription/translation feedback loop (TTFL) forms the core of the molecular circadian clock mechanism. Transcription factors, CLOCK or NPAS2 and BMAL1 or BMAL2, form the positive limb of the feedback loop, act in the form of a heterodimer and activate the transcription of core clock genes and clock-controlled genes (involved in key metabolic processes), harboring E-box elements (5'-CACGTG-3') within their promoters. The core clock genes: PER1/2/3 and CRY1/2 which are transcriptional repressors form the negative limb of the feedback loop and interact with the CLOCK|NPAS2-BMAL1|BMAL2 heterodimer inhibiting its activity and thereby negatively regulating their own expression. This heterodimer also activates nuclear receptors NR1D1/2 and RORA/B/G, which form a second feedback loop and which activate and repress BMAL1 transcription, respectively. CRY1 and CRY2 have redundant functions but also differential and selective contributions at least in defining the pace of the SCN circadian clock and its circadian transcriptional outputs. More potent transcriptional repressor in cerebellum and liver than CRY2, though more effective in lengthening the period of the SCN oscillator. On its side, CRY2 seems to play a critical role in tuning SCN circadian period by opposing the action of CRY1. With CRY2, is dispensable for circadian rhythm generation but necessary for the development of intercellular networks for rhythm synchrony. Capable of translocating circadian clock core proteins such as PER proteins to the nucleus. Interacts with CLOCK-BMAL1 independently of PER proteins and is found at CLOCK-BMAL1-bound sites, suggesting that CRY may act as a molecular gatekeeper to maintainCLOCK-BMAL1 in a poised and repressed state until the proper time for transcriptional activation. Represses the CLOCK-BMAL1 induced transcription of BHLHE40/DEC1, ATF4, MTA1, KLF10 and NAMPT. May repress circadian target genes expression in collaboration with HDAC1 and HDAC2 through histone deacetylation. Mediates the clock-control activation of ATR and modulates ATR-mediated DNA damage checkpoint. In liver, mediates circadian regulation of cAMP signaling and gluconeogenesis by binding to membrane-coupled G proteins and blocking glucagon-mediated increases in intracellular cAMP concentrations and CREB1 phosphorylation. Inhibits hepatic gluconeogenesis by decreasing nuclear FOXO1 levels that down-regulates gluconeogenic gene expression. Besides its role in the maintenance of the circadian clock, is also involved in the regulation of other processes. Represses glucocorticoid receptor NR3C1/GR-induced transcriptional activity by binding to glucocorticoid response elements (GREs). Plays a key role in glucose and lipid metabolism modulation, in part, through the transcriptional regulation of genes involved in these pathways, such as LEP or ACSL4. Represses PPARD and its target genes in the skeletal muscle and limits exercise capacity. Plays an essential role in the generation of circadian rhythms in the retina. Represses the transcriptional activity of NR1I2. This Macaca fascicularis (Crab-eating macaque) protein is Cryptochrome-1 (CRY1).